A 171-amino-acid polypeptide reads, in one-letter code: NADH-quinone oxidoreductase subunit B 2 (171 aa).

4 residues coordinate [4Fe-4S] cluster: C37, C38, C102, and C132.

This sequence belongs to the complex I 20 kDa subunit family. NDH-1 is composed of 14 different subunits. Subunits NuoB, C, D, E, F, and G constitute the peripheral sector of the complex. Requires [4Fe-4S] cluster as cofactor.

The protein localises to the cell inner membrane. The catalysed reaction is a quinone + NADH + 5 H(+)(in) = a quinol + NAD(+) + 4 H(+)(out). Its function is as follows. NDH-1 shuttles electrons from NADH, via FMN and iron-sulfur (Fe-S) centers, to quinones in the respiratory chain. Couples the redox reaction to proton translocation (for every two electrons transferred, four hydrogen ions are translocated across the cytoplasmic membrane), and thus conserves the redox energy in a proton gradient. The sequence is that of NADH-quinone oxidoreductase subunit B 2 from Chromobacterium violaceum (strain ATCC 12472 / DSM 30191 / JCM 1249 / CCUG 213 / NBRC 12614 / NCIMB 9131 / NCTC 9757 / MK).